Consider the following 370-residue polypeptide: Queuine tRNA-ribosyltransferase (370 aa).

D92 (proton acceptor) is an active-site residue. Residues 92 to 96, D146, Q190, and G217 contribute to the substrate site; that span reads DSGGF. Positions 248 to 254 are RNA binding; the sequence is GVGTPEN. The active-site Nucleophile is the D267. C305, C307, C310, and H336 together coordinate Zn(2+).

Belongs to the queuine tRNA-ribosyltransferase family. Homodimer. Within each dimer, one monomer is responsible for RNA recognition and catalysis, while the other monomer binds to the replacement base PreQ1. The cofactor is Zn(2+).

It catalyses the reaction 7-aminomethyl-7-carbaguanine + guanosine(34) in tRNA = 7-aminomethyl-7-carbaguanosine(34) in tRNA + guanine. It functions in the pathway tRNA modification; tRNA-queuosine biosynthesis. Its function is as follows. Catalyzes the base-exchange of a guanine (G) residue with the queuine precursor 7-aminomethyl-7-deazaguanine (PreQ1) at position 34 (anticodon wobble position) in tRNAs with GU(N) anticodons (tRNA-Asp, -Asn, -His and -Tyr). Catalysis occurs through a double-displacement mechanism. The nucleophile active site attacks the C1' of nucleotide 34 to detach the guanine base from the RNA, forming a covalent enzyme-RNA intermediate. The proton acceptor active site deprotonates the incoming PreQ1, allowing a nucleophilic attack on the C1' of the ribose to form the product. After dissociation, two additional enzymatic reactions on the tRNA convert PreQ1 to queuine (Q), resulting in the hypermodified nucleoside queuosine (7-(((4,5-cis-dihydroxy-2-cyclopenten-1-yl)amino)methyl)-7-deazaguanosine). The sequence is that of Queuine tRNA-ribosyltransferase from Desulforapulum autotrophicum (strain ATCC 43914 / DSM 3382 / VKM B-1955 / HRM2) (Desulfobacterium autotrophicum).